A 566-amino-acid chain; its full sequence is Medium-chain fatty-acid--CoA ligase (566 aa).

231–242 (ILASERAYCARL) serves as a coordination point for ATP.

The protein belongs to the ATP-dependent AMP-binding enzyme family. As to quaternary structure, homodimer. Mg(2+) is required as a cofactor.

It is found in the cell membrane. The enzyme catalyses hexanoate + ATP + CoA = hexanoyl-CoA + AMP + diphosphate. The catalysed reaction is octanoate + ATP + CoA = octanoyl-CoA + AMP + diphosphate. It catalyses the reaction dodecanoate + ATP + CoA = dodecanoyl-CoA + AMP + diphosphate. It functions in the pathway lipid metabolism; fatty acid beta-oxidation. Catalyzes the esterification, concomitant with transport, of exogenous fatty acids into metabolically active CoA thioesters for subsequent degradation or incorporation into phospholipids. Is maximally active on C6:0, C8:0 and C12:0 fatty acids, while has a low activity on C14-C18 chain length fatty acids. Is involved in the anaerobic beta-oxidative degradation of fatty acids, which allows anaerobic growth of E.coli on fatty acids as a sole carbon and energy source in the presence of nitrate or fumarate as a terminal electron acceptor. Can functionally replace FadD under anaerobic conditions. This Escherichia coli (strain K12) protein is Medium-chain fatty-acid--CoA ligase.